The primary structure comprises 119 residues: DNA-binding protein MmarC7_1157 (119 aa).

The span at 1-12 (MNPEEIRQRRLQ) shows a compositional bias: basic and acidic residues. Residues 1–37 (MNPEEIRQRRLQEMQAKAQEQGAANDPEAQRQAQEQQ) are disordered.

It belongs to the PDCD5 family.

The sequence is that of DNA-binding protein MmarC7_1157 from Methanococcus maripaludis (strain C7 / ATCC BAA-1331).